The following is a 554-amino-acid chain: MAIQHPDIQPAVNHSVQVAIAGAGPVGLMMANYLGQMGIDVLVVEKLDKLIDYPRAIGIDDEALRTMQSVGLVDDVLPHTTPWHAMRFLTPKGRCFADIQPMTDEFGWPRRNAFIQPQVDAVMLEGVSRFPNVRCLFSRELEAFSQQDDEVTLHLKTAEGQREIVKAQWLVACDGGASFVRRTLNVPFEGKTAPNQWIVVDIANDPLSTPHIYLCCDPVRPYVSAALPHAVRRFEFMVMPGETEEQLREPQNMRKLLSKVLPNPDNVELIRQRVYTHNARLAQRFRIDRVLLAGDAAHIMPVWQGQGYNSGMRDAFNLAWKLALVIQGKARDALLDTYQQERRDHAKAMIDLSVTAGNVLAPPKRWQGTLRDGVSWLLNYLPPVKRYFLEMRFKPMPQYYGGALVREGEAKHSPVGKMFIQPKVTLENGDVTLLDNAIGANFAVIGWGCNPLWGMSDEQIQQWRALGTRFIQVVPEVQIHTAQDNHDGVLRVGDTQGRLRSWFAQHNASLVVMRPDRFVAATAIPQTLGKTLNKLASVMTLTRPDADVSVEKVA.

FAD contacts are provided by residues 17-46 (QVAI…VVEK) and 285-295 (FRIDRVLLAGD).

Belongs to the PheA/TfdB FAD monooxygenase family. FAD is required as a cofactor.

The enzyme catalyses 3-(3-hydroxyphenyl)propanoate + NADH + O2 + H(+) = 3-(2,3-dihydroxyphenyl)propanoate + NAD(+) + H2O. It catalyses the reaction (2E)-3-(3-hydroxyphenyl)prop-2-enoate + NADH + O2 + H(+) = (2E)-3-(2,3-dihydroxyphenyl)prop-2-enoate + NAD(+) + H2O. The protein operates within aromatic compound metabolism; 3-phenylpropanoate degradation. In terms of biological role, catalyzes the insertion of one atom of molecular oxygen into position 2 of the phenyl ring of 3-(3-hydroxyphenyl)propionate (3-HPP) and hydroxycinnamic acid (3HCI). The chain is 3-(3-hydroxy-phenyl)propionate/3-hydroxycinnamic acid hydroxylase from Escherichia coli (strain 55989 / EAEC).